The chain runs to 786 residues: Aculeacin-A acylase (786 aa).

An N-terminal signal peptide occupies residues 1-22 (MTSSYMRLKAAAIAFGVIVATA). Residues 23–34 (AVPSPASGREHD) constitute a propeptide that is removed on maturation. Residues 35–130 (GGYAALIRRA…PRDGVRAPCD (96 aa)) form a substrate-binding region. Positions 215–229 (AAIAAALDGTSAGIG) are cleaved as a propeptide — spacer peptide. Residues 220–239 (ALDGTSAGIGSNAYGLGAQA) form a possible recognition-sequence of an AAC processing enzyme region. The active-site Nucleophile is the Ser230. The disordered stretch occupies residues 658 to 689 (ACNGSPASPSTRSVGDIHTDSRGERRIPIHGG). Residues 672 to 684 (GDIHTDSRGERRI) are compositionally biased toward basic and acidic residues.

Belongs to the peptidase S45 family. As to quaternary structure, heterodimer of a small subunit and a large subunit processed from the same precursor.

The protein resides in the secreted. Functionally, catalyzes the hydrolysis of the palmitoyl moiety of the antifungal antibiotic, aculeacin-A, giving a hexapeptide moiety and a long chain fatty acid. The protein is Aculeacin-A acylase (aac) of Actinoplanes utahensis.